We begin with the raw amino-acid sequence, 618 residues long: uncharacterized protein (618 aa).

Residues 1-45 (MSSKSASKLKREAKKAERLAAKGESVKPSKKNGTKNGKDKEVDGV) are disordered. Composition is skewed to basic and acidic residues over residues 14–27 (KKAERLAAKGESVK) and 36–45 (NGKDKEVDGV). Residues Ser-50 and Ser-53 each carry the phosphoserine modification. Thr-54 is subject to Phosphothreonine. Residues Ser-55 and Ser-64 each carry the phosphoserine modification. 2 ABC transporter domains span residues 76-325 (IKID…LKQQ) and 388-609 (IAFN…QSRD). Residues 108 to 115 (GDNGSGKS) and 423 to 430 (GKNGTGKS) contribute to the ATP site.

Belongs to the ABC transporter superfamily.

It is found in the cytoplasm. This is an uncharacterized protein from Schizosaccharomyces pombe (strain 972 / ATCC 24843) (Fission yeast).